The chain runs to 587 residues: uncharacterized protein (587 aa).

The region spanning Gly-61–Glu-426 is the YcaO domain.

This is an uncharacterized protein from Haemophilus influenzae (strain ATCC 51907 / DSM 11121 / KW20 / Rd).